The sequence spans 1668 residues: Zinc finger CCCH domain-containing protein 13 (1668 aa).

2 disordered regions span residues 1–38 (MSKI…GSTA) and 56–157 (TCRF…GDIN). Residues 10-23 (VENTKTISDSTSRR) show a composition bias toward polar residues. The C3H1-type zinc-finger motif lies at 36-64 (STAETQCRNWLKTGNCLYGNTCRFVHGPS). Phosphoserine is present on residues Ser64 and Ser77. A compositionally biased stretch (basic and acidic residues) spans 76 to 136 (RSPERPTGDL…IKITKERTPE (61 aa)). Residues Lys179 and Lys194 each participate in a glycyl lysine isopeptide (Lys-Gly) (interchain with G-Cter in SUMO2) cross-link. Disordered regions lie at residues 190–1112 (EIII…TATA) and 1125–1466 (AAAT…PISD). Ser198, Ser207, Ser209, and Ser211 each carry phosphoserine. Over residues 204-213 (SKLSPSPSLR) the composition is skewed to low complexity. Residues 214–224 (KSSKSPKRKSS) show a composition bias toward basic residues. Position 237 is a phosphothreonine (Thr237). 2 positions are modified to phosphoserine: Ser238 and Ser242. The span at 239–254 (AVSSPLLDQQRNSKTN) shows a compositional bias: polar residues. Residue Thr263 is modified to Phosphothreonine. Phosphoserine is present on Ser265. Residues 283 to 315 (KYKVKDRIEEKTRDGKDRGRDFERQREKRDKPR) show a composition bias toward basic and acidic residues. Residues Ser316, Ser318, Ser325, and Ser328 each carry the phosphoserine modification. Positions 323 to 346 (HHSPISSRHHSSSSQSGSSIQRHS) are enriched in low complexity. Thr354 and Thr364 each carry phosphothreonine. Residues Ser370, Ser372, and Ser381 each carry the phosphoserine modification. Low complexity predominate over residues 370-382 (SASPYPSHSLSSP). Composition is skewed to basic and acidic residues over residues 394–434 (PMRE…REER) and 442–575 (SSRD…EKGS). Positions 584–593 (DSHSSNSNYH) are enriched in low complexity. Residues 594–640 (DSWETRSSYPERDRYPERDNRDQARDSSFERRHGERDRRDNRERDQR) are compositionally biased toward basic and acidic residues. Ser643 carries the phosphoserine modification. A coiled-coil region spans residues 645–789 (IRHQGRNDEL…RDKERERQRD (145 aa)). The span at 649-821 (GRNDELERDE…NPRDGHDERK (173 aa)) shows a compositional bias: basic and acidic residues. Phosphoserine occurs at positions 831, 833, 837, 845, 848, 853, 873, 875, and 877. Basic and acidic residues predominate over residues 881–957 (LTEDRQGRWK…TSDRAHDENK (77 aa)). Thr882 is modified (phosphothreonine). At Ser943 the chain carries Phosphoserine. Basic residues predominate over residues 958–969 (KKAKIQKKPIKK). A compositionally biased stretch (basic and acidic residues) spans 970–981 (KKEDDVGIERGN). Residues Ser986, Ser993, Ser1010, Ser1014, and Ser1017 each carry the phosphoserine modification. The segment covering 996-1010 (KGQKKKSIEKKRKKS) has biased composition (basic residues). The residue at position 1033 (Thr1033) is a Phosphothreonine. Residues 1073–1083 (PDRTEVTEAEH) are compositionally biased toward basic and acidic residues. Low complexity-rich tracts occupy residues 1084 to 1100 (TATA…LSSL) and 1125 to 1153 (AAAT…TFAN). Over residues 1163 to 1188 (TRVEKVETPHVTIEDAQHRKPMDQKR) the composition is skewed to basic and acidic residues. Thr1170 is subject to Phosphothreonine. A phosphoserine mark is found at Ser1191, Ser1194, Ser1208, and Ser1210. Residues 1213–1223 (SAHRSGDDQSG) show a composition bias toward basic and acidic residues. At Ser1230 the chain carries Phosphoserine. Composition is skewed to basic and acidic residues over residues 1231–1286 (GSRD…DRQV) and 1294–1379 (DSRD…DRTF). Residues 1300-1366 (QERDRYEHDR…RERERLISDS (67 aa)) adopt a coiled-coil conformation. 11 positions are modified to phosphoserine: Ser1364, Ser1366, Ser1382, Ser1386, Ser1406, Ser1409, Ser1438, Leu1453, Gly1456, Ser1465, and Asp1466. Basic and acidic residues-rich tracts occupy residues 1386-1421 (SVKR…DKDL) and 1429-1438 (ETNKSERTES).

Belongs to the ZC3H13 family. As to quaternary structure, component of the WMM complex, a N6-methyltransferase complex composed of a catalytic subcomplex, named MAC, and of an associated subcomplex, named MACOM. The MAC subcomplex is composed of METTL3 and METTL14. The MACOM subcomplex is composed of WTAP, ZC3H13, CBLL1/HAKAI, VIRMA, and, in some cases of RBM15 (RBM15 or RBM15B). Also a component of a MACOM-like complex, named WTAP complex, composed of WTAP, ZC3H13, CBLL1/HAKAI, VIRMA, RBM15, BCLAF1 and THRAP3.

The protein resides in the nucleus speckle. Its subcellular location is the nucleus. It is found in the nucleoplasm. Associated component of the WMM complex, a complex that mediates N6-methyladenosine (m6A) methylation of RNAs, a modification that plays a role in the efficiency of mRNA splicing and RNA processing. Acts as a key regulator of m6A methylation by promoting m6A methylation of mRNAs at the 3'-UTR. Controls embryonic stem cells (ESCs) pluripotency via its role in m6A methylation. In the WMM complex, anchors component of the MACOM subcomplex in the nucleus. Also required for bridging WTAP to the RNA-binding component RBM15 (RBM15 or RBM15B). The chain is Zinc finger CCCH domain-containing protein 13 from Homo sapiens (Human).